The following is a 458-amino-acid chain: NADH-ubiquinone oxidoreductase chain 4 (458 aa).

13 consecutive transmembrane segments (helical) span residues 23–43 (LLWTATTFFSFLIAALSTLTL), 59–79 (IDQFSCPLIMLSCWLLPLTIM), 99–119 (LLILLQVLLCITFGASNLLMF), 148–168 (LYFLFYTLSASLPLLLALIMI), 174–194 (SLSIYIIPLSNLTLLLNTPWS), 197–217 (LWWIACFLAFLIKMPLYIFHL), 227–247 (PIAGSMILAAILLKLGGYGMI), 260–280 (LAVPFMIIAMWGMIVTSSICL), 289–311 (IAYSSVSHMGLVVAGIFTMTPWA), 315–337 (ALAMMIAHGLVSSGLLCLANITY), 355–375 (FPLMSFWWLMMTFANMALPPF), 396–416 (ILLLGLSMTLTALFSLNMLIM), and 438–458 (LMLMHMAPIILLIANPSAIMI).

It belongs to the complex I subunit 4 family.

It localises to the mitochondrion membrane. It carries out the reaction a ubiquinone + NADH + 5 H(+)(in) = a ubiquinol + NAD(+) + 4 H(+)(out). Its function is as follows. Core subunit of the mitochondrial membrane respiratory chain NADH dehydrogenase (Complex I) that is believed to belong to the minimal assembly required for catalysis. Complex I functions in the transfer of electrons from NADH to the respiratory chain. The immediate electron acceptor for the enzyme is believed to be ubiquinone. This chain is NADH-ubiquinone oxidoreductase chain 4 (MT-ND4), found in Petromyzon marinus (Sea lamprey).